We begin with the raw amino-acid sequence, 355 residues long: Uroporphyrinogen decarboxylase (355 aa).

Substrate-binding positions include 27–31, Asp-77, Tyr-154, Thr-209, and His-328; that span reads RQAGR.

Belongs to the uroporphyrinogen decarboxylase family. As to quaternary structure, homodimer.

The protein localises to the cytoplasm. It catalyses the reaction uroporphyrinogen III + 4 H(+) = coproporphyrinogen III + 4 CO2. Its pathway is porphyrin-containing compound metabolism; protoporphyrin-IX biosynthesis; coproporphyrinogen-III from 5-aminolevulinate: step 4/4. Functionally, catalyzes the decarboxylation of four acetate groups of uroporphyrinogen-III to yield coproporphyrinogen-III. This chain is Uroporphyrinogen decarboxylase, found in Colwellia psychrerythraea (strain 34H / ATCC BAA-681) (Vibrio psychroerythus).